Consider the following 333-residue polypeptide: Large ribosomal subunit protein uL3 (333 aa).

Basic residues-rich tracts occupy residues 1 to 10 (MGMKRNRPRR) and 17 to 26 (PRKRAKRPVP). Residues 1–29 (MGMKRNRPRRGSLAFSPRKRAKRPVPKIR) form a disordered region.

Belongs to the universal ribosomal protein uL3 family. Part of the 50S ribosomal subunit. Forms a cluster with proteins L14 and L24e.

Its function is as follows. One of the primary rRNA binding proteins, it binds directly near the 3'-end of the 23S rRNA, where it nucleates assembly of the 50S subunit. In Methanococcus aeolicus (strain ATCC BAA-1280 / DSM 17508 / OCM 812 / Nankai-3), this protein is Large ribosomal subunit protein uL3.